A 433-amino-acid chain; its full sequence is Tol-Pal system protein TolB (433 aa).

The first 21 residues, 1-21 (MRNLLRGMLVVICCMAGIAAA), serve as a signal peptide directing secretion.

Belongs to the TolB family. The Tol-Pal system is composed of five core proteins: the inner membrane proteins TolA, TolQ and TolR, the periplasmic protein TolB and the outer membrane protein Pal. They form a network linking the inner and outer membranes and the peptidoglycan layer.

The protein resides in the periplasm. Part of the Tol-Pal system, which plays a role in outer membrane invagination during cell division and is important for maintaining outer membrane integrity. The chain is Tol-Pal system protein TolB from Pseudomonas fluorescens (strain SBW25).